The following is a 933-amino-acid chain: Progesterone receptor (933 aa).

The interval 1–164 (MTELKAKGPR…PATQGVLSPL (164 aa)) is AF3; mediates transcriptional activation. The disordered stretch occupies residues 1–256 (MTELKAKGPR…AAAGGGAAAV (256 aa)). The interval 1–566 (MTELKAKGPR…YSFESLPQKI (566 aa)) is modulating, Pro-Rich. Ser-20 carries the post-translational modification Phosphoserine. The LXXL motif 1 signature appears at 55 to 59 (LDGLL). Residue Ser-81 is modified to Phosphoserine. Positions 115 to 119 (LETLL) match the LXXL motif 2 motif. Ser-130 and Ser-162 each carry phosphoserine. The interval 165–305 (MSRSGGKAGD…LATTVMDFIH (141 aa)) is mediates transcriptional transrepression. The short motif at 183–187 (KVLPR) is the Nuclear localization signal element. 2 positions are modified to phosphoserine: Ser-190 and Ser-213. Over residues 220-231 (EVEEEDGSESEE) the composition is skewed to acidic residues. The span at 232 to 246 (SAGPLLKGKPRALGG) shows a compositional bias: low complexity. Ser-294 is modified (phosphoserine; by MAPK1). Residues 331–378 (GGAGAASAFAPPRSSPSASSTPVAVGDFPDCAYPPDAEPKDDAYPLYS) form a disordered region. Positions 335-350 (AASAFAPPRSSPSASS) are enriched in low complexity. Ser-345 carries the post-translational modification Phosphoserine; by MAPK. Lys-388 is covalently cross-linked (Glycyl lysine isopeptide (Lys-Gly) (interchain with G-Cter in SUMO); alternate). Residue Lys-388 forms a Glycyl lysine isopeptide (Lys-Gly) (interchain with G-Cter in ubiquitin); alternate linkage. Phosphoserine; by CDK2 is present on Ser-400. The interval 415 to 452 (PDFPLGPPPPLPPRAPPSRPGEAAVTAAPASASVSSAS) is disordered. A compositionally biased stretch (pro residues) spans 418–433 (PLGPPPPLPPRAPPSR). Low complexity predominate over residues 434–452 (PGEAAVTAAPASASVSSAS). An AF1; mediates transcriptional activation region spans residues 456–546 (STLECILYKA…VYPPYLNYLR (91 aa)). Lys-531 is covalently cross-linked (Glycyl lysine isopeptide (Lys-Gly) (interchain with G-Cter in SUMO)). 2 NR C4-type zinc fingers span residues 567–587 (CLIC…CGSC) and 603–627 (CAGR…LRKC). The nuclear receptor DNA-binding region spans 567 to 639 (CLICGDEASG…AGMVLGGRKF (73 aa)). Phosphoserine is present on Ser-676. One can recognise an NR LBD domain in the interval 679–913 (QDIQLIPPLI…EFPEMMSEVI (235 aa)). Residues 687 to 933 (LINLLMSIEP…MVKPLLFHKK (247 aa)) are AF2; mediates transcriptional activation. Residue Arg-766 coordinates progesterone.

The protein belongs to the nuclear hormone receptor family. Interacts with SMARD1 and UNC45A. Interacts with CUEDC2; the interaction promotes ubiquitination, decreases sumoylation, and represses transcriptional activity. Interacts with PIAS3; the interaction promotes sumoylation of PR in a hormone-dependent manner, inhibits DNA-binding, and alters nuclear export. Interacts with SP1; the interaction requires ligand-induced phosphorylation on Ser-345 by ERK1/2-MAPK. Interacts with PRMT2. Interacts with NCOA2 and NCOA1. Interacts with KLF9. Interacts with GTF2B. Phosphorylated on multiple serine sites. Several of these sites are hormone-dependent. Phosphorylation on Ser-294 is highly hormone-dependent and modulates ubiquitination and sumoylation on Lys-388. Phosphorylation on Ser-102 and Ser-345 also requires induction by hormone. Basal phosphorylation on Ser-81, Ser-162, Ser-190 and Ser-400 is increased in response to progesterone and can be phosphorylated in vitro by the CDK2-A1 complex. Increased levels of phosphorylation on Ser-400 also in the presence of EGF, heregulin, IGF, PMA and FBS. Phosphorylation at this site by CDK2 is ligand-independent, and increases nuclear translocation and transcriptional activity. Phosphorylation at Ser-162 and Ser-294, but not at Ser-190, is impaired during the G(2)/M phase of the cell cycle. Phosphorylation on Ser-345 by ERK1/2 MAPK is required for interaction with SP1. Post-translationally, sumoylation is hormone-dependent and represses transcriptional activity. Sumoylation on all three sites is enhanced by PIAS3. Desumoylated by SENP1. Sumoylation on Lys-388, the main site of sumoylation, is repressed by ubiquitination on the same site, and modulated by phosphorylation at Ser-294. In terms of processing, ubiquitination is hormone-dependent and represses sumoylation on the same site. Promoted by MAPK-mediated phosphorylation on Ser-294. Ubiquitinated by UBR5, leading to its degradation: UBR5 specifically recognizes and binds ligand-bound PGR when it is not associated with coactivators (NCOAs). In presence of NCOAs, the UBR5-degron is not accessible, preventing its ubiquitination and degradation. Palmitoylated by ZDHHC7 and ZDHHC21. Palmitoylation is required for plasma membrane targeting and for rapid intracellular signaling via ERK and AKT kinases and cAMP generation.

It is found in the nucleus. The protein localises to the cytoplasm. In terms of biological role, the steroid hormones and their receptors are involved in the regulation of eukaryotic gene expression and affect cellular proliferation and differentiation in target tissues. Transcriptional activator of several progesteron-dependent promoters in a variety of cell types. Involved in activation of SRC-dependent MAPK signaling on hormone stimulation. This is Progesterone receptor (PGR) from Gorilla gorilla gorilla (Western lowland gorilla).